The following is a 284-amino-acid chain: MRLGFHMPLSGGVGKQLNRASELGMECIQIFSGNPTSWKPGKITPKSRDLFIKKQEELQIKPLVFHTPYLINLASPKNDIREKSIYLLNAALEKAKAYDAPYVVTHIGSHVGEGVEKGIDLVSYSLEKIMEDWPEGVELLLENTSGAGSTLGGSLTELKKIIDKFSGTQVLGCCFDTAHAWGAGYDISNVKEVETTLELVNEQLGLDLIKVCHANDTNVPLGSTKDRHQHIGEGNITDEGFGALLTHDSFTPKAVIMETPKNGTDCDQINLQRLKKVVGRHEEE.

Positions 66, 106, 142, 176, 179, 213, 226, 228, and 258 each coordinate Zn(2+).

Belongs to the AP endonuclease 2 family. Zn(2+) serves as cofactor.

The enzyme catalyses Endonucleolytic cleavage to 5'-phosphooligonucleotide end-products.. Endonuclease IV plays a role in DNA repair. It cleaves phosphodiester bonds at apurinic or apyrimidinic (AP) sites, generating a 3'-hydroxyl group and a 5'-terminal sugar phosphate. In Natranaerobius thermophilus (strain ATCC BAA-1301 / DSM 18059 / JW/NM-WN-LF), this protein is Probable endonuclease 4.